Here is a 444-residue protein sequence, read N- to C-terminus: Argininosuccinate synthase (444 aa).

Residues 18–26 (AFSGGLDTS) and Ala44 each bind ATP. Residue Tyr100 coordinates L-citrulline. ATP is bound by residues Gly130 and Thr132. Thr132, Asn136, and Asp137 together coordinate L-aspartate. An L-citrulline-binding site is contributed by Asn136. Asp137 provides a ligand contact to ATP. Positions 140 and 193 each coordinate L-citrulline. Residue Asp195 coordinates ATP. L-citrulline is bound by residues Thr202, Glu204, and Glu281.

This sequence belongs to the argininosuccinate synthase family. Type 2 subfamily. Homotetramer.

It is found in the cytoplasm. The catalysed reaction is L-citrulline + L-aspartate + ATP = 2-(N(omega)-L-arginino)succinate + AMP + diphosphate + H(+). It functions in the pathway amino-acid biosynthesis; L-arginine biosynthesis; L-arginine from L-ornithine and carbamoyl phosphate: step 2/3. In Histophilus somni (strain 2336) (Haemophilus somnus), this protein is Argininosuccinate synthase.